The sequence spans 165 residues: uncharacterized protein (165 aa).

This is an uncharacterized protein from Saccharomyces cerevisiae (strain ATCC 204508 / S288c) (Baker's yeast).